Reading from the N-terminus, the 359-residue chain is Peptide methionine sulfoxide reductase MsrA/MsrB (359 aa).

Residues 36 to 189 are peptide methionine sulfoxide reductase A; it reads RVIYLAGGCF…PSGYCHIDLK (154 aa). C44 is an active-site residue. The 124-residue stretch at 206 to 329 folds into the MsrB domain; the sequence is DEVLKKKLTK…NSAALRFIPL (124 aa). Catalysis depends on C318, which acts as the Nucleophile.

This sequence in the N-terminal section; belongs to the MsrA Met sulfoxide reductase family. In the C-terminal section; belongs to the MsrB Met sulfoxide reductase family.

The catalysed reaction is L-methionyl-[protein] + [thioredoxin]-disulfide + H2O = L-methionyl-(S)-S-oxide-[protein] + [thioredoxin]-dithiol. It catalyses the reaction [thioredoxin]-disulfide + L-methionine + H2O = L-methionine (S)-S-oxide + [thioredoxin]-dithiol. It carries out the reaction L-methionyl-[protein] + [thioredoxin]-disulfide + H2O = L-methionyl-(R)-S-oxide-[protein] + [thioredoxin]-dithiol. Has an important function as a repair enzyme for proteins that have been inactivated by oxidation. Catalyzes the reversible oxidation-reduction of methionine sulfoxide in proteins to methionine. This Helicobacter pylori (strain ATCC 700392 / 26695) (Campylobacter pylori) protein is Peptide methionine sulfoxide reductase MsrA/MsrB (msrAB).